Reading from the N-terminus, the 202-residue chain is MSEILELEAKSRNEFGTGAARALRREGRVPAIIYGAKKTPVSISLEEKEITKYYRKPAFISQLINLTIEGTQYKVLPKAVELHPVTDIVRHVDFVFLEDKTQKMEVPVVYEGKERALGVKRGGYFNIVKRRVTLLCDVNNIPRNVTIDVTNMPIATSLKSSKVKLPEGCSFTTKKEFVLATIIGRRGAKTEAEGEQTAEAAK.

This sequence belongs to the bacterial ribosomal protein bL25 family. CTC subfamily. As to quaternary structure, part of the 50S ribosomal subunit; part of the 5S rRNA/L5/L18/L25 subcomplex. Contacts the 5S rRNA. Binds to the 5S rRNA independently of L5 and L18.

In terms of biological role, this is one of the proteins that binds to the 5S RNA in the ribosome where it forms part of the central protuberance. The sequence is that of Large ribosomal subunit protein bL25 from Rickettsia bellii (strain OSU 85-389).